A 311-amino-acid chain; its full sequence is Aspartate carbamoyltransferase catalytic subunit (311 aa).

Residues arginine 58 and threonine 59 each coordinate carbamoyl phosphate. Position 86 (lysine 86) interacts with L-aspartate. 3 residues coordinate carbamoyl phosphate: arginine 108, histidine 136, and glutamine 139. Residues arginine 169 and arginine 223 each coordinate L-aspartate. 2 residues coordinate carbamoyl phosphate: glycine 264 and proline 265.

It belongs to the aspartate/ornithine carbamoyltransferase superfamily. ATCase family. In terms of assembly, heterododecamer (2C3:3R2) of six catalytic PyrB chains organized as two trimers (C3), and six regulatory PyrI chains organized as three dimers (R2).

The catalysed reaction is carbamoyl phosphate + L-aspartate = N-carbamoyl-L-aspartate + phosphate + H(+). Its pathway is pyrimidine metabolism; UMP biosynthesis via de novo pathway; (S)-dihydroorotate from bicarbonate: step 2/3. In terms of biological role, catalyzes the condensation of carbamoyl phosphate and aspartate to form carbamoyl aspartate and inorganic phosphate, the committed step in the de novo pyrimidine nucleotide biosynthesis pathway. This Desulfosudis oleivorans (strain DSM 6200 / JCM 39069 / Hxd3) (Desulfococcus oleovorans) protein is Aspartate carbamoyltransferase catalytic subunit.